Here is a 313-residue protein sequence, read N- to C-terminus: Adhesin MafA 1 (313 aa).

The first 14 residues, 1–14, serve as a signal peptide directing secretion; that stretch reads MKILLLLIPLVLTA. Residue Cys-15 is the site of N-palmitoyl cysteine attachment. The S-diacylglycerol cysteine moiety is linked to residue Cys-15. Residues 282 to 298 are compositionally biased toward polar residues; sequence GDTTAQNRPDFKQNNGK. Residues 282–313 are disordered; that stretch reads GDTTAQNRPDFKQNNGKNPDVGNEVIRRRKGG.

It belongs to the MafA family.

It localises to the cell outer membrane. This chain is Adhesin MafA 1 (mafA1), found in Neisseria meningitidis serogroup C / serotype 2a (strain ATCC 700532 / DSM 15464 / FAM18).